The chain runs to 88 residues: MTANEKSVRTETGKVVSDKMDKSIVVLVERRVKHPLYGKYVKRSSKLHAHDENNECRIGDTVQVQESRPLSKTKSWKLVNIVERAEKV.

The protein belongs to the universal ribosomal protein uS17 family. In terms of assembly, part of the 30S ribosomal subunit.

One of the primary rRNA binding proteins, it binds specifically to the 5'-end of 16S ribosomal RNA. This Hahella chejuensis (strain KCTC 2396) protein is Small ribosomal subunit protein uS17.